A 64-amino-acid chain; its full sequence is UPF0434 protein BAB2_0345 (64 aa).

This sequence belongs to the UPF0434 family.

This Brucella abortus (strain 2308) protein is UPF0434 protein BAB2_0345.